Reading from the N-terminus, the 127-residue chain is UPF0166 protein PYRAB06660 (127 aa).

Belongs to the UPF0166 family.

The sequence is that of UPF0166 protein PYRAB06660 from Pyrococcus abyssi (strain GE5 / Orsay).